Reading from the N-terminus, the 388-residue chain is MLAAFISRVLRRVAQKSARRVLVASRNSSNDATFEIKKCDLYLLEEGPPVTTVLTRAEGLKYYRMMLTVRRMELKADQLYKQKFIRGFCHLCDGQEACCVGLEAGINPSDHVITSYRAHGVCYTRGLSVRSILAELTGRRGGCAKGKGGSMHMYTKNFYGGNGIVGAQGPLGAGIALACKYKGNDEICLTLYGDGAANQGQIAEAFNMAALWKLPCVFICENNLYGMGTSTERAAASPDYYKRGNFIPGLKVDGMDVLCVREATKFAANYCRSGKGPILMELQTYRYHGHSMSDPGVSYRTREEIQEVRSKRDPIIILQDRMVNSKLATVEELKEIGAEVRKEIDDAAQFATTDPEPHLEELGHHIYSSDSSFEVRGANPWIKFKSVS.

Residues 1-27 (MLAAFISRVLRRVAQKSARRVLVASRN) constitute a mitochondrion transit peptide. Pyruvate-binding residues include His-90, Tyr-116, Arg-117, Gly-163, Val-165, Asp-194, Gly-195, Ala-196, Asn-223, and Tyr-225. Thiamine diphosphate is bound by residues Tyr-116, Arg-117, Gly-163, Val-165, Asp-194, Gly-195, Ala-196, and Asn-223. Asp-194 contacts Mg(2+). Asn-223 and Tyr-225 together coordinate Mg(2+). His-290 lines the thiamine diphosphate pocket. Phosphoserine; by PDK1, PDK2, PDK3 and PDK4 is present on Ser-291. At Ser-293 the chain carries Phosphoserine. Position 298 is a phosphoserine; by PDK3 (Ser-298).

Heterotetramer of two PDHA2 and two PDHB subunits. The heterotetramer interacts with DLAT, and is part of the multimeric pyruvate dehydrogenase complex that contains multiple copies of pyruvate dehydrogenase (E1), dihydrolipoamide acetyltransferase (DLAT, E2) and lipoamide dehydrogenase (DLD, E3). These subunits are bound to an inner core composed of about 48 DLAT and 12 PDHX molecules. The cofactor is thiamine diphosphate. Mg(2+) serves as cofactor. Post-translationally, phosphorylation at Ser-291, Ser-293 and Ser-298 by PDK family kinases inactivates the enzyme; for this phosphorylation at a single site is sufficient. Phosphorylation at Ser-293 interferes with access to active site, and thereby inactivates the enzyme. Dephosphorylation at all three sites, i.e. at Ser-291, Ser-293 and Ser-298, is required for reactivation. As to expression, testis. Expressed in postmeiotic spermatogenic cells.

The protein resides in the mitochondrion matrix. The enzyme catalyses N(6)-[(R)-lipoyl]-L-lysyl-[protein] + pyruvate + H(+) = N(6)-[(R)-S(8)-acetyldihydrolipoyl]-L-lysyl-[protein] + CO2. With respect to regulation, pyruvate dehydrogenase activity is inhibited by phosphorylation of PDHA2; it is reactivated by dephosphorylation. Functionally, the pyruvate dehydrogenase complex catalyzes the overall conversion of pyruvate to acetyl-CoA and CO(2), and thereby links the glycolytic pathway to the tricarboxylic cycle. This Homo sapiens (Human) protein is Pyruvate dehydrogenase E1 component subunit alpha, testis-specific form, mitochondrial (PDHA2).